The following is a 71-amino-acid chain: Protein PSY2 (71 aa).

The signal sequence occupies residues 1-20 (MSFGTRLLLFLILTLPLVTS). A propeptide spanning residues 21–46 (SSPNTLHVSGIVKTGTTSRFLMMTIE) is cleaved from the precursor. Position 48 is a sulfotyrosine (Y48). The interval 50–71 (DPSANTRHDPSVPTNAKADTTP) is disordered. The span at 61-71 (VPTNAKADTTP) shows a compositional bias: polar residues. A 4-hydroxyproline modification is found at P62. P62 carries an O-linked (Ara...) hydroxyproline glycan. Positions 65-71 (AKADTTP) are excised as a propeptide.

The protein belongs to the sulfated-peptide plant hormone family. The sulfation and the glycosylation are required for full activity.

The protein resides in the secreted. Its function is as follows. Promotes cellular proliferation and expansion. The sequence is that of Protein PSY2 (PSY2) from Arabidopsis thaliana (Mouse-ear cress).